The primary structure comprises 349 residues: Flagellar P-ring protein (349 aa).

The signal sequence occupies residues 1-20 (MSKAIKILLPLLLFSLSLQA).

It belongs to the FlgI family. In terms of assembly, the basal body constitutes a major portion of the flagellar organelle and consists of four rings (L,P,S, and M) mounted on a central rod.

It localises to the periplasm. Its subcellular location is the bacterial flagellum basal body. Functionally, assembles around the rod to form the L-ring and probably protects the motor/basal body from shearing forces during rotation. The polypeptide is Flagellar P-ring protein (Wolinella succinogenes (strain ATCC 29543 / DSM 1740 / CCUG 13145 / JCM 31913 / LMG 7466 / NCTC 11488 / FDC 602W) (Vibrio succinogenes)).